Here is a 160-residue protein sequence, read N- to C-terminus: Periplasmic nitrate reductase, electron transfer subunit (160 aa).

The first 25 residues, 1 to 25 (MKTRIIFAALALAAAMPLLVSGVFA), serve as a signal peptide directing secretion. Histidine 73, cysteine 87, cysteine 90, histidine 91, histidine 108, cysteine 127, cysteine 130, and histidine 131 together coordinate heme c.

The protein belongs to the NapB family. Component of the periplasmic nitrate reductase NapAB complex composed of NapA and NapB. Binds 2 heme C groups per subunit.

The protein localises to the periplasm. Functionally, electron transfer subunit of the periplasmic nitrate reductase complex NapAB. Receives electrons from the membrane-anchored tetraheme c-type NapC protein and transfers these to NapA subunit, thus allowing electron flow between membrane and periplasm. Essential for periplasmic nitrate reduction with nitrate as the terminal electron acceptor. The protein is Periplasmic nitrate reductase, electron transfer subunit of Azospirillum brasilense.